The following is a 99-amino-acid chain: Co-chaperonin GroES (99 aa).

Belongs to the GroES chaperonin family. Heptamer of 7 subunits arranged in a ring. Interacts with the chaperonin GroEL.

The protein resides in the cytoplasm. Together with the chaperonin GroEL, plays an essential role in assisting protein folding. The GroEL-GroES system forms a nano-cage that allows encapsulation of the non-native substrate proteins and provides a physical environment optimized to promote and accelerate protein folding. GroES binds to the apical surface of the GroEL ring, thereby capping the opening of the GroEL channel. The chain is Co-chaperonin GroES from Corynebacterium efficiens (strain DSM 44549 / YS-314 / AJ 12310 / JCM 11189 / NBRC 100395).